Consider the following 317-residue polypeptide: Acetyl-coenzyme A carboxylase carboxyl transferase subunit beta (317 aa).

The interval 1-28 (MANNMTDTMTKFDTNNDSASLQQNGNKA) is disordered. The region spanning 55 to 317 (PSTKCSSCHS…LCSVPNVDAQ (263 aa)) is the CoA carboxyltransferase N-terminal domain. Residues Cys-59, Cys-62, Cys-78, and Cys-81 each coordinate Zn(2+). A C4-type zinc finger spans residues 59–81 (CSSCHSVITNTALIFNCYVCPHC).

Belongs to the AccD/PCCB family. In terms of assembly, acetyl-CoA carboxylase is a heterohexamer composed of biotin carboxyl carrier protein (AccB), biotin carboxylase (AccC) and two subunits each of ACCase subunit alpha (AccA) and ACCase subunit beta (AccD). Zn(2+) is required as a cofactor.

Its subcellular location is the cytoplasm. It carries out the reaction N(6)-carboxybiotinyl-L-lysyl-[protein] + acetyl-CoA = N(6)-biotinyl-L-lysyl-[protein] + malonyl-CoA. It participates in lipid metabolism; malonyl-CoA biosynthesis; malonyl-CoA from acetyl-CoA: step 1/1. Functionally, component of the acetyl coenzyme A carboxylase (ACC) complex. Biotin carboxylase (BC) catalyzes the carboxylation of biotin on its carrier protein (BCCP) and then the CO(2) group is transferred by the transcarboxylase to acetyl-CoA to form malonyl-CoA. The sequence is that of Acetyl-coenzyme A carboxylase carboxyl transferase subunit beta from Psychrobacter arcticus (strain DSM 17307 / VKM B-2377 / 273-4).